Consider the following 511-residue polypeptide: Cytochrome P450 26B1 (511 aa).

Residue Cys-440 coordinates heme.

Belongs to the cytochrome P450 family. Requires heme as cofactor.

The protein localises to the endoplasmic reticulum membrane. The protein resides in the microsome membrane. It carries out the reaction all-trans-retinoate + reduced [NADPH--hemoprotein reductase] + O2 = all-trans-4-hydroxyretinoate + oxidized [NADPH--hemoprotein reductase] + H2O + H(+). The catalysed reaction is all-trans-retinoate + reduced [NADPH--hemoprotein reductase] + O2 = all-trans-18-hydroxyretinoate + oxidized [NADPH--hemoprotein reductase] + H2O + H(+). Functionally, a cytochrome P450 monooxygenase involved in the metabolism of retinoates (RAs), the active metabolites of vitamin A, and critical signaling molecules in animals. RAs exist as at least four different isomers: all-trans-RA (atRA), 9-cis-RA, 13-cis-RA, and 9,13-dicis-RA, where atRA is considered to be the biologically active isomer, although 9-cis-RA and 13-cis-RA also have activity. Catalyzes the hydroxylation of atRA primarily at C-4 and C-18, thereby contributing to the regulation of atRA homeostasis and signaling. Hydroxylation of atRA limits its biological activity and initiates a degradative process leading to its eventual elimination. Involved in the convertion of atRA to all-trans-4-oxo-RA. Can oxidize all-trans-13,14-dihydroretinoate (DRA) to metabolites which could include all-trans-4-oxo-DRA, all-trans-4-hydroxy-DRA, all-trans-5,8-epoxy-DRA, and all-trans-18-hydroxy-DRA. This chain is Cytochrome P450 26B1 (cyp26b1), found in Xenopus tropicalis (Western clawed frog).